We begin with the raw amino-acid sequence, 1475 residues long: Sterol 3-beta-glucosyltransferase (1475 aa).

Disordered stretches follow at residues 1-73 (MPPP…PPMF) and 94-218 (HDRF…EDDK). A compositionally biased stretch (low complexity) spans 8–17 (LPLHGPAGAA). Residues 30–40 (RVGKKLQKKRH) are compositionally biased toward basic residues. Over residues 108 to 118 (GPQRDSADRSH) the composition is skewed to basic and acidic residues. Over residues 156–168 (EKHKRKISGHKLL) the composition is skewed to basic residues. In terms of domain architecture, GRAM 1 spans 270–315 (QDIFEFDQPEAVIEEYPCWLLQSVLLQGYMYITAKHICFYSYLPKK). The PH domain maps to 318–413 (EVVKSGYLSK…WVKSLQRVIF (96 aa)). Disordered regions lie at residues 492–541 (ARLK…TTNK), 594–636 (SSPR…MEEP), and 653–715 (QILR…PVTP). Low complexity predominate over residues 505–531 (QQQQQQHPMQPPMQASARSSMSGSRRA). 2 stretches are compositionally biased toward polar residues: residues 621–634 (QQGSTDSYVQSSME) and 653–674 (QILRGSDVFQNPTMRRSGSASR). Residues 675 to 686 (TEVEKQQRRDPR) show a composition bias toward basic and acidic residues. The region spanning 798-901 (RFRAHFALPE…RDDCAVTLLQ (104 aa)) is the GRAM 2 domain. S989, R990, D992, A1293, H1295, H1308, S1311, G1312, T1313, D1332, and Q1333 together coordinate UDP-alpha-D-glucose. A disordered region spans residues 1413 to 1475 (IQVEPDEDEE…RVSPSQQSVA (63 aa)). The segment covering 1416-1425 (EPDEDEESAE) has biased composition (acidic residues).

This sequence belongs to the glycosyltransferase 28 family.

It is found in the cytoplasm. It localises to the preautophagosomal structure membrane. The enzyme catalyses a sterol + UDP-alpha-D-glucose = a sterol 3-beta-D-glucoside + UDP + H(+). It carries out the reaction ergosterol + UDP-alpha-D-glucose = ergosteryl 3-beta-D-glucoside + UDP + H(+). Functionally, sterol glycosyltransferase responsible for the glycosylation of ergosterol to form ergosterol-glucoside. Mediates autophagic degradation of peroxisomes (pexophagy) and is involved in pathogenesis via peroxisome degradation inside appressoria that are developing into the host invasion stage. The sequence is that of Sterol 3-beta-glucosyltransferase from Glomerella lagenarium (Anthracnose fungus).